The chain runs to 572 residues: Proline--tRNA ligase (572 aa).

Belongs to the class-II aminoacyl-tRNA synthetase family. ProS type 1 subfamily. As to quaternary structure, homodimer.

The protein localises to the cytoplasm. It carries out the reaction tRNA(Pro) + L-proline + ATP = L-prolyl-tRNA(Pro) + AMP + diphosphate. Functionally, catalyzes the attachment of proline to tRNA(Pro) in a two-step reaction: proline is first activated by ATP to form Pro-AMP and then transferred to the acceptor end of tRNA(Pro). As ProRS can inadvertently accommodate and process non-cognate amino acids such as alanine and cysteine, to avoid such errors it has two additional distinct editing activities against alanine. One activity is designated as 'pretransfer' editing and involves the tRNA(Pro)-independent hydrolysis of activated Ala-AMP. The other activity is designated 'posttransfer' editing and involves deacylation of mischarged Ala-tRNA(Pro). The misacylated Cys-tRNA(Pro) is not edited by ProRS. The chain is Proline--tRNA ligase from Escherichia coli O17:K52:H18 (strain UMN026 / ExPEC).